We begin with the raw amino-acid sequence, 138 residues long: Small ribosomal subunit protein uS11c (138 aa).

Positions 1–23 (MAKAIPRRSSRRNGRIGSRKSAR) are disordered.

This sequence belongs to the universal ribosomal protein uS11 family. Part of the 30S ribosomal subunit.

Its subcellular location is the plastid. The protein localises to the chloroplast. In Ipomoea purpurea (Common morning glory), this protein is Small ribosomal subunit protein uS11c.